A 231-amino-acid chain; its full sequence is 5'-methylthioadenosine/S-adenosylhomocysteine nucleosidase (231 aa).

Glu12 functions as the Proton acceptor in the catalytic mechanism. Residues Gly78, Ile153, and 174–175 contribute to the substrate site; that span reads ME. The Proton donor role is filled by Asp198.

It belongs to the PNP/UDP phosphorylase family. MtnN subfamily.

The catalysed reaction is S-adenosyl-L-homocysteine + H2O = S-(5-deoxy-D-ribos-5-yl)-L-homocysteine + adenine. The enzyme catalyses S-methyl-5'-thioadenosine + H2O = 5-(methylsulfanyl)-D-ribose + adenine. It catalyses the reaction 5'-deoxyadenosine + H2O = 5-deoxy-D-ribose + adenine. The protein operates within amino-acid biosynthesis; L-methionine biosynthesis via salvage pathway; S-methyl-5-thio-alpha-D-ribose 1-phosphate from S-methyl-5'-thioadenosine (hydrolase route): step 1/2. Functionally, catalyzes the irreversible cleavage of the glycosidic bond in both 5'-methylthioadenosine (MTA) and S-adenosylhomocysteine (SAH/AdoHcy) to adenine and the corresponding thioribose, 5'-methylthioribose and S-ribosylhomocysteine, respectively. Also cleaves 5'-deoxyadenosine, a toxic by-product of radical S-adenosylmethionine (SAM) enzymes, into 5-deoxyribose and adenine. The sequence is that of 5'-methylthioadenosine/S-adenosylhomocysteine nucleosidase from Shewanella putrefaciens (strain CN-32 / ATCC BAA-453).